The chain runs to 239 residues: Ubiquinone biosynthesis O-methyltransferase (239 aa).

S-adenosyl-L-methionine is bound by residues Arg-44, Gly-63, Asp-84, and Met-128.

The protein belongs to the methyltransferase superfamily. UbiG/COQ3 family.

It carries out the reaction a 3-demethylubiquinol + S-adenosyl-L-methionine = a ubiquinol + S-adenosyl-L-homocysteine + H(+). The catalysed reaction is a 3-(all-trans-polyprenyl)benzene-1,2-diol + S-adenosyl-L-methionine = a 2-methoxy-6-(all-trans-polyprenyl)phenol + S-adenosyl-L-homocysteine + H(+). The protein operates within cofactor biosynthesis; ubiquinone biosynthesis. O-methyltransferase that catalyzes the 2 O-methylation steps in the ubiquinone biosynthetic pathway. The protein is Ubiquinone biosynthesis O-methyltransferase of Xanthomonas axonopodis pv. citri (strain 306).